A 359-amino-acid chain; its full sequence is Small ribosomal subunit protein mS22 (359 aa).

It belongs to the mitochondrion-specific ribosomal protein mS22 family. As to quaternary structure, component of the mitochondrial ribosome small subunit (28S) which comprises a 12S rRNA and about 30 distinct proteins.

It is found in the mitochondrion. In Bos taurus (Bovine), this protein is Small ribosomal subunit protein mS22 (MRPS22).